A 338-amino-acid polypeptide reads, in one-letter code: Ferrochelatase (338 aa).

Fe cation is bound by residues His189 and Glu294.

This sequence belongs to the ferrochelatase family.

The protein resides in the cytoplasm. The catalysed reaction is heme b + 2 H(+) = protoporphyrin IX + Fe(2+). The protein operates within porphyrin-containing compound metabolism; protoheme biosynthesis; protoheme from protoporphyrin-IX: step 1/1. Catalyzes the ferrous insertion into protoporphyrin IX. The polypeptide is Ferrochelatase (Pseudomonas putida (strain ATCC 700007 / DSM 6899 / JCM 31910 / BCRC 17059 / LMG 24140 / F1)).